A 160-amino-acid polypeptide reads, in one-letter code: Type IV major fimbrial protein FimA (160 aa).

A propeptide spans 1–7 (MKSLQKG) (leader sequence). Phe-8 bears the N-methylphenylalanine mark. The helical transmembrane segment at 8-28 (FTLIELMIVVAIIGILAAFAI) threads the bilayer. A disulfide bridge connects residues Cys-63 and Cys-105.

This sequence belongs to the N-Me-Phe pilin family. In terms of assembly, the pili are polar flexible filaments of about 5.4 nanometers diameter and 2.5 micrometers average length; they consist of only a single polypeptide chain arranged in a helical configuration of five subunits per turn in the assembled pilus.

Its subcellular location is the fimbrium. It localises to the membrane. Major component of the type IV fimbriae that plays an essential role in twitching motility, natural transformation, and protease secretion. The chain is Type IV major fimbrial protein FimA (fimA) from Dichelobacter nodosus (Bacteroides nodosus).